The following is a 78-amino-acid chain: Large ribosomal subunit protein bL28 (78 aa).

This sequence belongs to the bacterial ribosomal protein bL28 family.

The chain is Large ribosomal subunit protein bL28 from Flavobacterium johnsoniae (strain ATCC 17061 / DSM 2064 / JCM 8514 / BCRC 14874 / CCUG 350202 / NBRC 14942 / NCIMB 11054 / UW101) (Cytophaga johnsonae).